A 162-amino-acid polypeptide reads, in one-letter code: Lymphocyte antigen 86 (162 aa).

Residues 1–19 (MNGVAAALLVWILTSPSSS) form the signal peptide. 3 disulfide bridges follow: cysteine 33–cysteine 58, cysteine 45–cysteine 154, and cysteine 102–cysteine 112. Asparagine 96 is a glycosylation site (N-linked (GlcNAc...) asparagine). Asparagine 156 carries N-linked (GlcNAc...) asparagine glycosylation.

In terms of assembly, M-shaped tetramer of two CD180-LY86 heterodimers. As to expression, highly expressed in spleen, liver, brain and thymus, and at lower levels in kidney.

The protein resides in the secreted. The protein localises to the extracellular space. Functionally, may cooperate with CD180 and TLR4 to mediate the innate immune response to bacterial lipopolysaccharide (LPS) and cytokine production. Important for efficient CD180 cell surface expression. The protein is Lymphocyte antigen 86 (Ly86) of Mus musculus (Mouse).